We begin with the raw amino-acid sequence, 428 residues long: Serine--tRNA ligase (428 aa).

231-233 lines the L-serine pocket; that stretch reads TAE. 262-264 serves as a coordination point for ATP; the sequence is RSE. L-serine is bound at residue E285. 349 to 352 serves as a coordination point for ATP; it reads EISS. Position 385 (S385) interacts with L-serine.

The protein belongs to the class-II aminoacyl-tRNA synthetase family. Type-1 seryl-tRNA synthetase subfamily. In terms of assembly, homodimer. The tRNA molecule binds across the dimer.

It is found in the cytoplasm. It catalyses the reaction tRNA(Ser) + L-serine + ATP = L-seryl-tRNA(Ser) + AMP + diphosphate + H(+). It carries out the reaction tRNA(Sec) + L-serine + ATP = L-seryl-tRNA(Sec) + AMP + diphosphate + H(+). It functions in the pathway aminoacyl-tRNA biosynthesis; selenocysteinyl-tRNA(Sec) biosynthesis; L-seryl-tRNA(Sec) from L-serine and tRNA(Sec): step 1/1. Functionally, catalyzes the attachment of serine to tRNA(Ser). Is also able to aminoacylate tRNA(Sec) with serine, to form the misacylated tRNA L-seryl-tRNA(Sec), which will be further converted into selenocysteinyl-tRNA(Sec). This chain is Serine--tRNA ligase, found in Staphylococcus aureus (strain Mu3 / ATCC 700698).